Consider the following 91-residue polypeptide: MMKLVLFGIIVILFSLIGSIHGISGNYPLNPYGGYYYCTILGENEYCKKICRIHGVRYGYCYDSACWCETLKDEDVSVWNAVKKHCKNPYL.

Residues 1–22 (MMKLVLFGIIVILFSLIGSIHG) form the signal peptide. Positions 24–87 (SGNYPLNPYG…VWNAVKKHCK (64 aa)) constitute an LCN-type CS-alpha/beta domain. 3 disulfides stabilise this stretch: cysteine 38–cysteine 61, cysteine 47–cysteine 66, and cysteine 51–cysteine 68.

Belongs to the long (3 C-C) scorpion toxin superfamily. In terms of assembly, monomer (edited version) and heterodimer (non-edited version) of this alpha chain and a beta chain (AC P84809). Expressed by the venom gland.

It is found in the secreted. In terms of biological role, the heterodimer non-edited LVP1 induces lipolysis in rat adipocytes. Induction of lipolysis by LVP1 appears to be mediated through the beta-2 adrenergic receptor pathway (ADRB2). Intracerebroventricular injection is not toxic to mice. The edited BmKBTx-like, similar to beta-toxins, may modulate voltage-gated sodium channels (Nav) and may block voltage-gated potassium channels (Kv). This Buthus occitanus tunetanus (Common European scorpion) protein is Lipolysis-activating peptide 1-alpha chain.